The chain runs to 180 residues: 3-deoxy-D-manno-octulosonate 8-phosphate phosphatase KdsC (180 aa).

Aspartate 14 and aspartate 16 together coordinate Mg(2+). Substrate-binding positions include aspartate 16, 37-41 (HVRDG), lysine 45, arginine 60, arginine 68, and lysine 84. Aspartate 107 contributes to the Mg(2+) binding site.

This sequence belongs to the KdsC family. Homotetramer. Mg(2+) serves as cofactor.

It carries out the reaction 3-deoxy-alpha-D-manno-2-octulosonate-8-phosphate + H2O = 3-deoxy-alpha-D-manno-oct-2-ulosonate + phosphate. Its function is as follows. Catalyzes the hydrolysis of 3-deoxy-D-manno-octulosonate 8-phosphate (KDO 8-P) to 3-deoxy-D-manno-octulosonate (KDO) and inorganic phosphate. The protein is 3-deoxy-D-manno-octulosonate 8-phosphate phosphatase KdsC of Haemophilus influenzae (strain ATCC 51907 / DSM 11121 / KW20 / Rd).